A 218-amino-acid chain; its full sequence is GTP cyclohydrolase 1 (218 aa).

Residues Cys111, His114, and Cys182 each coordinate Zn(2+).

It belongs to the GTP cyclohydrolase I family. As to quaternary structure, toroid-shaped homodecamer, composed of two pentamers of five dimers.

It carries out the reaction GTP + H2O = 7,8-dihydroneopterin 3'-triphosphate + formate + H(+). It participates in cofactor biosynthesis; 7,8-dihydroneopterin triphosphate biosynthesis; 7,8-dihydroneopterin triphosphate from GTP: step 1/1. The chain is GTP cyclohydrolase 1 from Buchnera aphidicola subsp. Schizaphis graminum (strain Sg).